Here is a 379-residue protein sequence, read N- to C-terminus: Chaperone protein DnaJ (379 aa).

The 66-residue stretch at 5–70 folds into the J domain; it reads DYYEVLGVGK…EKKAAYDQYG (66 aa). The segment at 139 to 217 adopts a CR-type zinc-finger fold; sequence GHEAQIRVPH…CHGQGKLKSQ (79 aa). Positions 152, 155, 169, 172, 191, 194, 205, and 208 each coordinate Zn(2+). CXXCXGXG motif repeat units follow at residues 152–159, 169–176, 191–198, and 205–212; these read CDHCHGNG, CPTCHGAG, CPKCHGSG, and CTKCHGQG. The tract at residues 356–379 is disordered; the sequence is VHEGGSRHSPQEQSWLDKVKSFFS.

The protein belongs to the DnaJ family. As to quaternary structure, homodimer. The cofactor is Zn(2+).

The protein localises to the cytoplasm. Functionally, participates actively in the response to hyperosmotic and heat shock by preventing the aggregation of stress-denatured proteins and by disaggregating proteins, also in an autonomous, DnaK-independent fashion. Unfolded proteins bind initially to DnaJ; upon interaction with the DnaJ-bound protein, DnaK hydrolyzes its bound ATP, resulting in the formation of a stable complex. GrpE releases ADP from DnaK; ATP binding to DnaK triggers the release of the substrate protein, thus completing the reaction cycle. Several rounds of ATP-dependent interactions between DnaJ, DnaK and GrpE are required for fully efficient folding. Also involved, together with DnaK and GrpE, in the DNA replication of plasmids through activation of initiation proteins. This is Chaperone protein DnaJ from Cupriavidus pinatubonensis (strain JMP 134 / LMG 1197) (Cupriavidus necator (strain JMP 134)).